A 102-amino-acid polypeptide reads, in one-letter code: uncharacterized protein (102 aa).

The N-terminal stretch at 1–22 (MKFKYGATLFSGFLGLSAILAA) is a signal peptide. Cysteine 23 carries N-palmitoyl cysteine lipidation. A lipid anchor (S-diacylglycerol cysteine) is attached at cysteine 23.

This sequence belongs to the MG185/MG260 family.

The protein localises to the cell membrane. This is an uncharacterized protein from Mycoplasma pneumoniae (strain ATCC 29342 / M129 / Subtype 1) (Mycoplasmoides pneumoniae).